The primary structure comprises 1550 residues: DNA excision repair protein ERCC-6-like 2 (1550 aa).

Positions 1-23 (MDPSAPQPRAETSGKDIWHPGER) are disordered. The span at 12-22 (TSGKDIWHPGE) shows a compositional bias: basic and acidic residues. The Helicase ATP-binding domain occupies 135-321 (YGHYIHGGGC…WCVMDWAVPG (187 aa)). 148–155 (DDMGLGKT) contributes to the ATP binding site. Positions 272–275 (DEAH) match the DEAH box motif. Positions 512–662 (VLQQLLNHCR…CVVVGSENAK (151 aa)) constitute a Helicase C-terminal domain. The Atypical PIP-box signature appears at 785 to 796 (PGQLTLLQCGFS). 3 disordered regions span residues 808–848 (DSDG…TSKH), 914–1002 (FPDN…SSLR), and 1354–1410 (AETK…TRTG). Basic and acidic residues-rich tracts occupy residues 830–840 (EAKDAGCEKNQ) and 933–953 (TEHT…DKRN). Phosphoserine is present on residues Ser980 and Ser983. Positions 992–1002 (SRVRKRASSLR) are enriched in basic residues. The span at 1359 to 1388 (SPVSSTQEIDSGKNSQASEDTVTSRSLNSE) shows a compositional bias: polar residues. Residues Ser1373 and Ser1376 each carry the phosphoserine modification. Residues 1389-1405 (SETRERRLENTMKDQQD) show a composition bias toward basic and acidic residues.

This sequence belongs to the SNF2/RAD54 helicase family. Interacts with NEK6. Interacts (via an atypical PIP-box) with PCNA; this interaction facilitates cenrtomeric localization of ERCC6L2. Interacts with CYREN; this interaction is DNA independent. Interacts with XRCC6 and XRCC5. Post-translationally, phosphorylated by NEK6. In terms of tissue distribution, expressed in bone marrow (at protein level).

The protein resides in the nucleus. The protein localises to the cytoplasm. It localises to the cytoskeleton. It is found in the microtubule organizing center. Its subcellular location is the centrosome. The protein resides in the mitochondrion. The protein localises to the chromosome. It localises to the centromere. Its function is as follows. Promotes double-strand break (DSB) end-joining and facilitates programmed recombination by controlling how DNA ends are joined in a spatially oriented manner during repair. Also plays a role in DNA repair by restricting DNA end resection in double strand break (DSB) repair. Facilitates replication of complex DNA regions and regulates the maintenance of chromatin structure. The polypeptide is DNA excision repair protein ERCC-6-like 2 (Homo sapiens (Human)).